Reading from the N-terminus, the 467-residue chain is Glutamate--tRNA ligase (467 aa).

A 'HIGH' region motif is present at residues 9–19; that stretch reads PSPTGYLHIGG. Residues 237-241 carry the 'KMSKS' region motif; the sequence is KLSKR. Lys-240 serves as a coordination point for ATP.

It belongs to the class-I aminoacyl-tRNA synthetase family. Glutamate--tRNA ligase type 1 subfamily. Monomer.

It localises to the cytoplasm. The enzyme catalyses tRNA(Glu) + L-glutamate + ATP = L-glutamyl-tRNA(Glu) + AMP + diphosphate. In terms of biological role, catalyzes the attachment of glutamate to tRNA(Glu) in a two-step reaction: glutamate is first activated by ATP to form Glu-AMP and then transferred to the acceptor end of tRNA(Glu). The sequence is that of Glutamate--tRNA ligase from Xylella fastidiosa (strain M23).